Consider the following 136-residue polypeptide: uncharacterized protein (136 aa).

This is an uncharacterized protein from Enterobacteria phage T4 (Bacteriophage T4).